A 382-amino-acid chain; its full sequence is Lipid-A-disaccharide synthase (382 aa).

Belongs to the LpxB family.

The enzyme catalyses 2-N,3-O-bis[(3R)-3-hydroxytetradecanoyl]-alpha-D-glucosaminyl 1-phosphate + UDP-2-N,3-O-bis[(3R)-3-hydroxytetradecanoyl]-alpha-D-glucosamine = lipid A disaccharide (E. coli) + UDP + H(+). It catalyses the reaction a lipid X + a UDP-2-N,3-O-bis[(3R)-3-hydroxyacyl]-alpha-D-glucosamine = a lipid A disaccharide + UDP + H(+). The protein operates within glycolipid biosynthesis; lipid IV(A) biosynthesis; lipid IV(A) from (3R)-3-hydroxytetradecanoyl-[acyl-carrier-protein] and UDP-N-acetyl-alpha-D-glucosamine: step 5/6. Its function is as follows. Condensation of UDP-2,3-diacylglucosamine and 2,3-diacylglucosamine-1-phosphate to form lipid A disaccharide, a precursor of lipid A, a phosphorylated glycolipid that anchors the lipopolysaccharide to the outer membrane of the cell. The sequence is that of Lipid-A-disaccharide synthase from Serratia proteamaculans (strain 568).